Here is a 444-residue protein sequence, read N- to C-terminus: Elongation factor 1-alpha (444 aa).

In terms of domain architecture, tr-type G spans lysine 14–arginine 235. A G1 region spans residues glycine 23–serine 30. Glycine 23–serine 30 serves as a coordination point for GTP. Serine 30 provides a ligand contact to Mg(2+). A G2 region spans residues glycine 79–glutamate 83. Positions aspartate 100 to glycine 103 are G3. GTP-binding positions include aspartate 100–histidine 104 and asparagine 162–aspartate 165. The tract at residues asparagine 162–aspartate 165 is G4. The interval serine 201–valine 203 is G5.

Belongs to the TRAFAC class translation factor GTPase superfamily. Classic translation factor GTPase family. EF-Tu/EF-1A subfamily.

It is found in the cytoplasm. It carries out the reaction GTP + H2O = GDP + phosphate + H(+). GTP hydrolase that promotes the GTP-dependent binding of aminoacyl-tRNA to the A-site of ribosomes during protein biosynthesis. The chain is Elongation factor 1-alpha from Caldivirga maquilingensis (strain ATCC 700844 / DSM 13496 / JCM 10307 / IC-167).